The primary structure comprises 296 residues: Ribosomal RNA small subunit methyltransferase H (296 aa).

Residues 30 to 32 (GGH), D49, F76, D97, and Q104 each bind S-adenosyl-L-methionine.

Belongs to the methyltransferase superfamily. RsmH family.

Its subcellular location is the cytoplasm. It carries out the reaction cytidine(1402) in 16S rRNA + S-adenosyl-L-methionine = N(4)-methylcytidine(1402) in 16S rRNA + S-adenosyl-L-homocysteine + H(+). Its function is as follows. Specifically methylates the N4 position of cytidine in position 1402 (C1402) of 16S rRNA. The polypeptide is Ribosomal RNA small subunit methyltransferase H (Mesomycoplasma hyopneumoniae (strain 232) (Mycoplasma hyopneumoniae)).